Here is a 249-residue protein sequence, read N- to C-terminus: Aspartate/glutamate leucyltransferase (249 aa).

The protein belongs to the R-transferase family. Bpt subfamily.

It localises to the cytoplasm. It catalyses the reaction N-terminal L-glutamyl-[protein] + L-leucyl-tRNA(Leu) = N-terminal L-leucyl-L-glutamyl-[protein] + tRNA(Leu) + H(+). The catalysed reaction is N-terminal L-aspartyl-[protein] + L-leucyl-tRNA(Leu) = N-terminal L-leucyl-L-aspartyl-[protein] + tRNA(Leu) + H(+). Its function is as follows. Functions in the N-end rule pathway of protein degradation where it conjugates Leu from its aminoacyl-tRNA to the N-termini of proteins containing an N-terminal aspartate or glutamate. In Azorhizobium caulinodans (strain ATCC 43989 / DSM 5975 / JCM 20966 / LMG 6465 / NBRC 14845 / NCIMB 13405 / ORS 571), this protein is Aspartate/glutamate leucyltransferase.